A 197-amino-acid chain; its full sequence is Probable thymidylate kinase (197 aa).

7 to 14 (GLDGSGKT) is an ATP binding site.

The protein belongs to the thymidylate kinase family.

The catalysed reaction is dTMP + ATP = dTDP + ADP. The sequence is that of Probable thymidylate kinase from Halorubrum lacusprofundi (strain ATCC 49239 / DSM 5036 / JCM 8891 / ACAM 34).